A 119-amino-acid chain; its full sequence is Histone H1B, sperm (119 aa).

An H15 domain is found at 8–77 (THPPVATAVV…QNKGSFRVNK (70 aa)). The interval 76–119 (NKTALPKKKKAAKKPKAKKVKKPKSAAKKKTNRARAPKTKKNRN) is disordered. The span at 80–119 (LPKKKKAAKKPKAKKVKKPKSAAKKKTNRARAPKTKKNRN) shows a compositional bias: basic residues.

The protein belongs to the histone H1/H5 family.

It localises to the nucleus. Its subcellular location is the chromosome. Its function is as follows. Histones H1 are necessary for the condensation of nucleosome chains into higher-order structures. In Platynereis dumerilii (Dumeril's clam worm), this protein is Histone H1B, sperm.